The following is a 1235-amino-acid chain: MFGNLFEEDYSSVSSSQYGRGKKLKTKGLEPPAPREFTNLSGIRNQGGTCYLSSLLQTLHFTPEFREALFSLGPEELGSLEDKDKPDAKVRIIPLQLQRLFAQLLLLDQEAASTIDLTDSFGWTNDEEMRQHDVQELNRILFSALETSLVGTSGHDLIHRLYHGTIVNQIVCKECKNISERQEDFLDLTVAVKNVSGLEDELCNMYVEEEIFDYDNLYHCGTCDRLVKAAKSAKLRKLPPFLTISLLRFNFDFVKCERYKDTSCYTFPLRINLKPFCEQSELDDMEYMYDLFSVIIHKGGCYGGHYHVYIKDVDHLGNWQCQEEISDTNVNVKAPQSEEEANDPLVVLKTILLQEEANQIPVDQLGQKLLKKTGISWNKKYRKQHGPLRKFLQLHPQIFLLSTDESTVSLLRNHLTQAPSDLQSCEQILHTLASESPGLNDDTSCPHWFDINDSKVHPIREKDITQQFQGKESAYMLFYRKATLQRPPEARANPRYRVPCHLLKEMDAANILLQMRRAECDSANSTFELHLHLGPHYRFFNGALHPAVSETESVWDLTFDKRKTLGDLRQSIFQLLECWEGDMVLSVAKRVPAGLHVYHTLDGDDLTLCEAEVADGEDIFVWNGVEVGGVQIQTGFDCEPLLLNILHLELSGEGSKCEQLVESPHVFPANAEVGAVFTALGTPAGAILMNSVESADGECWTAVPKEDMKKTFREQGLRNGSLILVQDSDSDNNSLLPKQGRWTNSMNELNWLQVKNFCQSESEEKQVQIAVTMHTVVFDIRIKAIKELKLMKELAENSCLRPIDRNGKLLCPVPDSSTLEEAEVKMGSSVGLCLGKAPTSSQLFLFFALGTDIHPGAEMDIIVEETLSVRDCLKIMLEKSGQQGEIWHLRKMDWCYEAGEPLCEEDATLKELMIRSGDTLLLTEGKLPPPGHLKMPIWWYQPARLSGHCESRDHLNCAFSQDSTWRAAPTQGAPGPEPAEVSLLYLGDMEISEEATLVELKSQALALPSVSKLAVQSTALLRVWTVESKRPSRLLRTNWRQLKEYRLGRRAELCLELLQKEEDLGPRDVLLRTQLRIPGERAYSLATDLIWDTTRGWTAGSLRQRVADFYSLPVEKIEIAKYFPEKFEWLPISSWNQQVAKRKKKKNQDTLQGGPYYLKDGDTIGIKNLLFDDNDDFSTIRDDIGKENQKRLALEKKKSREVHRAQSSDLFSNAGVPARFRGPEASLSIHVASFR.

Residues 41–482 (SGIRNQGGTC…SAYMLFYRKA (442 aa)) form the USP domain. Residue cysteine 50 is the Nucleophile of the active site. The Proton acceptor role is filled by histidine 305.

It belongs to the peptidase C19 family.

The catalysed reaction is Thiol-dependent hydrolysis of ester, thioester, amide, peptide and isopeptide bonds formed by the C-terminal Gly of ubiquitin (a 76-residue protein attached to proteins as an intracellular targeting signal).. The sequence is that of Ubiquitin carboxyl-terminal hydrolase 40 (Usp40) from Mus musculus (Mouse).